Reading from the N-terminus, the 116-residue chain is uncharacterized protein (116 aa).

A disordered region spans residues Ser-77 to Arg-116.

This is an uncharacterized protein from Frog virus 3 (isolate Goorha) (FV-3).